A 328-amino-acid chain; its full sequence is Aspartate carbamoyltransferase catalytic subunit (328 aa).

The carbamoyl phosphate site is built by Arg70 and Thr71. Residue Lys98 coordinates L-aspartate. Carbamoyl phosphate contacts are provided by Arg120, His150, and Gln153. L-aspartate is bound by residues Arg183 and Arg238. Gly279 and Pro280 together coordinate carbamoyl phosphate.

It belongs to the aspartate/ornithine carbamoyltransferase superfamily. ATCase family. As to quaternary structure, heterododecamer (2C3:3R2) of six catalytic PyrB chains organized as two trimers (C3), and six regulatory PyrI chains organized as three dimers (R2).

The enzyme catalyses carbamoyl phosphate + L-aspartate = N-carbamoyl-L-aspartate + phosphate + H(+). The protein operates within pyrimidine metabolism; UMP biosynthesis via de novo pathway; (S)-dihydroorotate from bicarbonate: step 2/3. Catalyzes the condensation of carbamoyl phosphate and aspartate to form carbamoyl aspartate and inorganic phosphate, the committed step in the de novo pyrimidine nucleotide biosynthesis pathway. The chain is Aspartate carbamoyltransferase catalytic subunit from Methylococcus capsulatus (strain ATCC 33009 / NCIMB 11132 / Bath).